We begin with the raw amino-acid sequence, 214 residues long: MIKLNTIFDYPNISLHFDLHISLGEKIAIIGESGAGKSTLLNLIAGFEPVKQGEIRLNGENHTYTAPHQRPVSILFQEHNLFTHLTVWQNIAIGLRADLKLSKEEIKQLEKVASAVGLTDFLSRLPKELSGGQRQRVALARCLLRDKPILLLDEPFSALDPHLRQEMLTLIDKFCREKQLTLLLVTHQLSEVIDKIDRIVEIKNGQATEREIPR.

One can recognise an ABC transporter domain in the interval isoleucine 2–isoleucine 212. Position 31-38 (glycine 31–serine 38) interacts with ATP.

Belongs to the ABC transporter superfamily. Thiamine importer (TC 3.A.1.19.1) family. As to quaternary structure, the complex is composed of two ATP-binding proteins (ThiQ), two transmembrane proteins (ThiP) and a solute-binding protein (ThiB).

It is found in the cell inner membrane. The catalysed reaction is thiamine(out) + ATP + H2O = thiamine(in) + ADP + phosphate + H(+). In terms of biological role, part of the ABC transporter complex ThiBPQ involved in thiamine import. Responsible for energy coupling to the transport system. The protein is Thiamine import ATP-binding protein ThiQ of Histophilus somni (strain 129Pt) (Haemophilus somnus).